The chain runs to 208 residues: Small ribosomal subunit protein uS4 (208 aa).

The S4 RNA-binding domain occupies 98–159; that stretch reads RRLDNVVYRL…KSRNVAAISE (62 aa).

The protein belongs to the universal ribosomal protein uS4 family. Part of the 30S ribosomal subunit. Contacts protein S5. The interaction surface between S4 and S5 is involved in control of translational fidelity.

One of the primary rRNA binding proteins, it binds directly to 16S rRNA where it nucleates assembly of the body of the 30S subunit. Functionally, with S5 and S12 plays an important role in translational accuracy. The chain is Small ribosomal subunit protein uS4 from Trichlorobacter lovleyi (strain ATCC BAA-1151 / DSM 17278 / SZ) (Geobacter lovleyi).